We begin with the raw amino-acid sequence, 232 residues long: MKIGIIGAINQETERLKKIIHFYIEKKINTYKIYIGKFKSHDVFLIKSGIGKVSASIATMILIDLYKPDTIINSGSAGSLQSFLKIGDIIIPKKTCYYDVDLTNFGYTRGQIPGYPKEFTVNEKICNFFKKNADKYQLKYIKGLILSGDTFVRENESIKILKKQFPSAIAVEMESSAIAQVCYKFNIPLIIIKSISDASDNNATVNFKENIDIVSYQLSKFVKIILENLIDM.

Glutamate 12 acts as the Proton acceptor in catalysis. Substrate is bound by residues glycine 78, valine 152, and 173-174 (ME). Aspartate 197 functions as the Proton donor in the catalytic mechanism.

Belongs to the PNP/UDP phosphorylase family. MtnN subfamily. In terms of assembly, homodimer.

It catalyses the reaction S-adenosyl-L-homocysteine + H2O = S-(5-deoxy-D-ribos-5-yl)-L-homocysteine + adenine. It carries out the reaction S-methyl-5'-thioadenosine + H2O = 5-(methylsulfanyl)-D-ribose + adenine. The catalysed reaction is 5'-deoxyadenosine + H2O = 5-deoxy-D-ribose + adenine. It functions in the pathway amino-acid biosynthesis; L-methionine biosynthesis via salvage pathway; S-methyl-5-thio-alpha-D-ribose 1-phosphate from S-methyl-5'-thioadenosine (hydrolase route): step 1/2. In terms of biological role, catalyzes the irreversible cleavage of the glycosidic bond in both 5'-methylthioadenosine (MTA) and S-adenosylhomocysteine (SAH/AdoHcy) to adenine and the corresponding thioribose, 5'-methylthioribose and S-ribosylhomocysteine, respectively. Also cleaves 5'-deoxyadenosine, a toxic by-product of radical S-adenosylmethionine (SAM) enzymes, into 5-deoxyribose and adenine. Thus, is required for in vivo function of the radical SAM enzymes biotin synthase and lipoic acid synthase, that are inhibited by 5'-deoxyadenosine accumulation. The polypeptide is 5'-methylthioadenosine/S-adenosylhomocysteine nucleosidase (Buchnera aphidicola subsp. Acyrthosiphon pisum (strain 5A)).